The sequence spans 76 residues: Lividin-2 (76 aa).

The N-terminal stretch at 1–22 (MFTLKKSLLLLFFLGTISLSLC) is a signal peptide. Residues 23–41 (QEERNADEEDGGEVTEEEV) constitute a propeptide that is removed on maturation. An intrachain disulfide couples Cys-70 to Cys-76.

Expressed by the skin glands.

The protein localises to the secreted. In terms of biological role, antimicrobial peptide. The protein is Lividin-2 of Odorrana livida (Green mountain frog).